Reading from the N-terminus, the 423-residue chain is Osteomodulin (423 aa).

An N-terminal signal peptide occupies residues 1–20 (MGFLSPIYVLFFCFGVRVYC). Residues Tyr-22, Tyr-25, Tyr-31, Tyr-39, Tyr-51, and Tyr-77 each carry the sulfotyrosine modification. Positions 53–91 (VPFYNNILGCAKECFCPTNFPTSMYCDNRKLKTIPIIPM) constitute an LRRNT domain. LRR repeat units follow at residues 92–113 (HIQQ…SFIN), 116–129 (HLKE…KIKS), 142–164 (NLQQ…PKSL), 165–184 (ERLL…AMDG), 187–207 (NVTM…KEKT), 213–233 (KLMQ…GLPS), 234–255 (SLMY…YFDK), 258–279 (KLHA…IFNL), 281–294 (NLIE…KLKQ), 301–322 (NLEH…MICP), and 331–353 (HLTY…IFFC). Asn-113 and Asn-121 each carry an N-linked (GlcNAc...) asparagine glycan. Asn-187 carries an N-linked (GlcNAc...) asparagine glycan. Asn-242 and Asn-278 each carry an N-linked (GlcNAc...) asparagine glycan. Asn-316 carries an N-linked (GlcNAc...) asparagine glycan. Cysteines 321 and 353 form a disulfide. Positions 381-406 (RSYQEEEEEDDHDSQDNTLEGQEVSD) are disordered. 2 positions are modified to sulfotyrosine: Tyr-413 and Tyr-414.

Belongs to the small leucine-rich proteoglycan (SLRP) family. SLRP class II subfamily. In terms of assembly, binds the alpha(V)beta(3)-integrin. Glycosylated; contains keratan sulfate. As to expression, bone specific.

It is found in the secreted. The protein resides in the extracellular space. It localises to the extracellular matrix. May be implicated in biomineralization processes. Has a function in binding of osteoblasts via the alpha(V)beta(3)-integrin. The chain is Osteomodulin (Omd) from Mus musculus (Mouse).